Reading from the N-terminus, the 249-residue chain is Ribosomal RNA small subunit methyltransferase J (249 aa).

Residues 101–102 (RD), 117–118 (ER), and aspartate 171 each bind S-adenosyl-L-methionine.

The protein belongs to the methyltransferase superfamily. RsmJ family.

It localises to the cytoplasm. It carries out the reaction guanosine(1516) in 16S rRNA + S-adenosyl-L-methionine = N(2)-methylguanosine(1516) in 16S rRNA + S-adenosyl-L-homocysteine + H(+). Specifically methylates the guanosine in position 1516 of 16S rRNA. The sequence is that of Ribosomal RNA small subunit methyltransferase J from Tolumonas auensis (strain DSM 9187 / NBRC 110442 / TA 4).